The following is a 320-amino-acid chain: Probable movement protein (320 aa).

Catalysis depends on residues histidine 144, aspartate 171, and serine 199. 2 disordered regions span residues 251 to 270 (RRSR…QEKR) and 286 to 320 (EFGR…GSSP).

The protein belongs to the tobamoviruses movement protein family.

May play a role in virus cell to cell movement by increasing the size exclusion limit of plasmodesmata and forming a complex with viral RNA to assist its movement. May also have a papain-like protease activity and cleave the genome polyprotein. This chain is Probable movement protein, found in Malus sylvestris (European crab apple).